A 318-amino-acid chain; its full sequence is Formimidoylglutamase (318 aa).

6 residues coordinate Mn(2+): histidine 130, aspartate 155, histidine 157, aspartate 159, aspartate 246, and aspartate 248.

This sequence belongs to the arginase family. Mn(2+) serves as cofactor.

The catalysed reaction is N-formimidoyl-L-glutamate + H2O = formamide + L-glutamate. It functions in the pathway amino-acid degradation; L-histidine degradation into L-glutamate; L-glutamate from N-formimidoyl-L-glutamate (hydrolase route): step 1/1. Catalyzes the conversion of N-formimidoyl-L-glutamate to L-glutamate and formamide. The protein is Formimidoylglutamase of Klebsiella pneumoniae (strain 342).